A 571-amino-acid polypeptide reads, in one-letter code: uncharacterized protein (571 aa).

The interval 1–25 (MAPSVATSLKAEILPSPRTSSPSSN) is disordered. Residues 135 to 389 (FSVFPAPILD…RGLHKNAFAT (255 aa)) form the FAD-binding FR-type domain. Positions 447–479 (NPLQKSSDDDASSTVSQQTETEMDSFEVKKDGT) are disordered.

This sequence belongs to the flavoprotein pyridine nucleotide cytochrome reductase family. Requires FAD as cofactor.

This is an uncharacterized protein from Schizosaccharomyces pombe (strain 972 / ATCC 24843) (Fission yeast).